A 179-amino-acid polypeptide reads, in one-letter code: Adenine phosphoribosyltransferase (179 aa).

This sequence belongs to the purine/pyrimidine phosphoribosyltransferase family. As to quaternary structure, homodimer.

It localises to the cytoplasm. It catalyses the reaction AMP + diphosphate = 5-phospho-alpha-D-ribose 1-diphosphate + adenine. It functions in the pathway purine metabolism; AMP biosynthesis via salvage pathway; AMP from adenine: step 1/1. In terms of biological role, catalyzes a salvage reaction resulting in the formation of AMP, that is energically less costly than de novo synthesis. In Helicobacter pylori (strain HPAG1), this protein is Adenine phosphoribosyltransferase.